We begin with the raw amino-acid sequence, 441 residues long: Protein translocase subunit SecY (441 aa).

A run of 10 helical transmembrane segments spans residues 24-44 (LFVLGALIVYRIGSFIPVPGI), 77-97 (ILALGIMPYISASIVIQLLAT), 123-143 (ATVVFATIQAVAISTGLPNML), 152-172 (FSFYFTSVVSLVTGTMFLMWL), 181-201 (IGNGISILVFGGIVAGLPSAI), 215-235 (PLVLLLIAAIVFAVTYFVVFV), 272-292 (VMPAIFASSIILFPATLTQWF), 313-333 (PLYLLVYAVAIIFFSFFYTAM), 373-393 (LIGGLYVTFVCLVPYIMTSAW), and 397-417 (FYFGGTSLLIVVVVIMDFIVQ).

This sequence belongs to the SecY/SEC61-alpha family. As to quaternary structure, component of the Sec protein translocase complex. Heterotrimer consisting of SecY, SecE and SecG subunits. The heterotrimers can form oligomers, although 1 heterotrimer is thought to be able to translocate proteins. Interacts with the ribosome. Interacts with SecDF, and other proteins may be involved. Interacts with SecA.

The protein resides in the cell inner membrane. Functionally, the central subunit of the protein translocation channel SecYEG. Consists of two halves formed by TMs 1-5 and 6-10. These two domains form a lateral gate at the front which open onto the bilayer between TMs 2 and 7, and are clamped together by SecE at the back. The channel is closed by both a pore ring composed of hydrophobic SecY resides and a short helix (helix 2A) on the extracellular side of the membrane which forms a plug. The plug probably moves laterally to allow the channel to open. The ring and the pore may move independently. The polypeptide is Protein translocase subunit SecY (Haemophilus influenzae (strain ATCC 51907 / DSM 11121 / KW20 / Rd)).